Consider the following 168-residue polypeptide: Large ribosomal subunit protein uL10 (168 aa).

The protein belongs to the universal ribosomal protein uL10 family. Part of the ribosomal stalk of the 50S ribosomal subunit. The N-terminus interacts with L11 and the large rRNA to form the base of the stalk. The C-terminus forms an elongated spine to which L12 dimers bind in a sequential fashion forming a multimeric L10(L12)X complex.

Functionally, forms part of the ribosomal stalk, playing a central role in the interaction of the ribosome with GTP-bound translation factors. This chain is Large ribosomal subunit protein uL10, found in Clostridium acetobutylicum (strain ATCC 824 / DSM 792 / JCM 1419 / IAM 19013 / LMG 5710 / NBRC 13948 / NRRL B-527 / VKM B-1787 / 2291 / W).